The sequence spans 301 residues: Acetyl-coenzyme A carboxylase carboxyl transferase subunit beta (301 aa).

The 270-residue stretch at 29-298 (LWVKCPETGQ…AEPAEEEAEP (270 aa)) folds into the CoA carboxyltransferase N-terminal domain.

The protein belongs to the AccD/PCCB family. In terms of assembly, acetyl-CoA carboxylase is a heterohexamer composed of biotin carboxyl carrier protein (AccB), biotin carboxylase (AccC) and two subunits each of ACCase subunit alpha (AccA) and ACCase subunit beta (AccD).

It localises to the cytoplasm. The catalysed reaction is N(6)-carboxybiotinyl-L-lysyl-[protein] + acetyl-CoA = N(6)-biotinyl-L-lysyl-[protein] + malonyl-CoA. It functions in the pathway lipid metabolism; malonyl-CoA biosynthesis; malonyl-CoA from acetyl-CoA: step 1/1. Its function is as follows. Component of the acetyl coenzyme A carboxylase (ACC) complex. Biotin carboxylase (BC) catalyzes the carboxylation of biotin on its carrier protein (BCCP) and then the CO(2) group is transferred by the transcarboxylase to acetyl-CoA to form malonyl-CoA. The chain is Acetyl-coenzyme A carboxylase carboxyl transferase subunit beta from Methylobacterium nodulans (strain LMG 21967 / CNCM I-2342 / ORS 2060).